A 127-amino-acid chain; its full sequence is Thioredoxin domain-containing protein 8 (127 aa).

Positions 2-127 (VQKIKSMREF…KLEEKIQELM (126 aa)) constitute a Thioredoxin domain. Cysteines 32 and 35 form a disulfide.

Belongs to the thioredoxin family. Testis-specific. Expressed in spermatozoa, sperm tail, elongated and round spermatids.

Its subcellular location is the cytoplasm. It is found in the golgi apparatus. In terms of biological role, may be required for post-translational modifications of proteins required for acrosomal biogenesis. May act by reducing disulfide bonds within the sperm. The protein is Thioredoxin domain-containing protein 8 (Txndc8) of Rattus norvegicus (Rat).